Consider the following 505-residue polypeptide: Buccalin (505 aa).

An N-terminal signal peptide occupies residues 1-25; sequence MAHHRGHRHILLYVSLALSLGLALA. Residues 26–62 constitute a propeptide that is removed on maturation; the sequence is EDATDPSDDTGSFDDVEAVSEEADLDPYSMSQELNKR. V74 bears the Valine amide mark. L88 and L102 each carry leucine amide. Q106 carries the pyrrolidone carboxylic acid modification. Position 116 is an isoleucine amide (I116). L129, L143, L157, L171, L185, L199, L213, L227, L241, L254, L267, L281, L294, L307, L321, and L335 each carry leucine amide. E349 bears the Glutamic acid 1-amide mark. Residues L363, L377, L391, L405, L419, and L433 each carry the leucine amide modification. Isoleucine amide is present on residues I447 and I461. Q465 bears the Pyrrolidone carboxylic acid mark. Residues 472–505 form a disordered region; the sequence is SGRLGKRSSSEQEEEDVRQVEKRSTTEEQSSKSL. L475 is modified (leucine amide). Residues 488–505 are compositionally biased toward basic and acidic residues; sequence VRQVEKRSTTEEQSSKSL. Positions 495–505 are excised as a propeptide; that stretch reads STTEEQSSKSL.

As to expression, cholinergic motor neuron B15 innervating buccal muscles in Aplysia.

Its subcellular location is the secreted. In terms of biological role, modulatory neuropeptide, acting presynaptically on nerve terminals to inhibit acetylcholine release. In Aplysia californica (California sea hare), this protein is Buccalin.